The primary structure comprises 136 residues: uncharacterized protein (136 aa).

This is an uncharacterized protein from Saccharomyces cerevisiae (strain ATCC 204508 / S288c) (Baker's yeast).